The chain runs to 613 residues: Epsin-2 (613 aa).

The 133-residue stretch at 11-143 (NMMKGYSSTQ…NDEERLREER (133 aa)) folds into the ENTH domain. Disordered regions lie at residues 140-208 (REER…DDED), 323-351 (TAAN…PFSM), and 356-375 (RQKQ…EARQ). The segment covering 148 to 167 (RNRRANRAARPRPRRQRTRS) has biased composition (basic residues). Residue Thr165 is modified to Phosphothreonine. Ser167 carries the phosphoserine modification. 2 UIM domains span residues 175 to 194 (SYQD…AQED) and 206 to 225 (DEDP…EELK). Residues 179 to 188 (DLEKALEESR) are compositionally biased toward basic and acidic residues. Residues 323–339 (TAANMQQQQQQPADFQQ) show a composition bias toward low complexity. Over residues 340–350 (PLPTGSNNPFS) the composition is skewed to polar residues. Lys426 participates in a covalent cross-link: Glycyl lysine isopeptide (Lys-Gly) (interchain with G-Cter in ubiquitin). The residue at position 430 (Thr430) is a Phosphothreonine. Position 434 is a phosphoserine (Ser434). Residues Thr450, Thr468, and Thr470 each carry the phosphothreonine modification. Polar residues predominate over residues 471–512 (GTFINSQGTGYKQVTNEPKNNPFLSNQYTGLPSTNIVPTQTG). A disordered region spans residues 471–613 (GTFINSQGTG…PDQGVSLIDL (143 aa)). The segment covering 526–600 (SPQQNPTGIS…QQQQQQQQQQ (75 aa)) has biased composition (low complexity).

Belongs to the epsin family. In terms of processing, phosphorylated by PRK1.

Its subcellular location is the cytoplasm. The protein resides in the membrane. Functionally, binds to membranes enriched in phosphatidylinositol 3,5-bisphosphate (PtdIns(3,5)P2) and phosphatidylinositol 4,5-bisphosphate (PtdIns(4,5)P2). Required for endocytosis and localization of actin. The polypeptide is Epsin-2 (ENT2) (Saccharomyces cerevisiae (strain ATCC 204508 / S288c) (Baker's yeast)).